The sequence spans 358 residues: GDSL esterase/lipase At2g30220 (358 aa).

The N-terminal stretch at 1 to 22 (MYISKTIVFGLFVATLLVSCNA) is a signal peptide. Residue Asn-25 is glycosylated (N-linked (GlcNAc...) asparagine). Ser-40 functions as the Nucleophile in the catalytic mechanism. Residues Asn-102 and Asn-324 are each glycosylated (N-linked (GlcNAc...) asparagine). Active-site residues include Asp-332 and His-335.

This sequence belongs to the 'GDSL' lipolytic enzyme family.

It localises to the secreted. The polypeptide is GDSL esterase/lipase At2g30220 (Arabidopsis thaliana (Mouse-ear cress)).